Here is a 780-residue protein sequence, read N- to C-terminus: Chloride channel protein CLC-b (780 aa).

The tract at residues 1 to 28 is disordered; it reads MVEEDLNQIGGNSNYNGEGGDPESNTLN. The next 12 helical transmembrane spans lie at 87–107, 130–150, 177–197, 205–225, 247–267, 277–297, 327–347, 370–390, 452–472, 477–497, 509–529, and 530–550; these read TLAC…NLAV, GLMV…VLCV, FGAT…AAGL, LVHI…DNHR, GSAA…LFAL, ALLW…REFI, VTDI…GSLY, VLLS…LPFL, MGSL…TFGI, GLFL…GAAM, AVLG…SLCV, and IFLE…VLLI. 2 consecutive CBS domains span residues 594 to 663 and 708 to 770; these read AKPP…FLTE and TNTT…AFPL. The helical transmembrane segment at 735–755 threads the bilayer; that stretch reads HLLIVPKIQASGMCPVVGILT.

The protein belongs to the chloride channel (TC 2.A.49) family. As to quaternary structure, homodimer. Interacts with PP2A5. In terms of tissue distribution, broadly expressed in the plant.

The protein localises to the membrane. Functionally, voltage-gated chloride channel. The polypeptide is Chloride channel protein CLC-b (CLC-B) (Arabidopsis thaliana (Mouse-ear cress)).